A 149-amino-acid chain; its full sequence is Nucleoside diphosphate kinase 1 (149 aa).

ATP is bound by residues Lys9, Phe57, Arg85, Thr91, Arg102, and Asn112. His115 serves as the catalytic Pros-phosphohistidine intermediate.

As to quaternary structure, homohexamer. Mg(2+) is required as a cofactor.

It catalyses the reaction a 2'-deoxyribonucleoside 5'-diphosphate + ATP = a 2'-deoxyribonucleoside 5'-triphosphate + ADP. The catalysed reaction is a ribonucleoside 5'-diphosphate + ATP = a ribonucleoside 5'-triphosphate + ADP. Functionally, major role in the synthesis of nucleoside triphosphates other than ATP. The ATP gamma phosphate is transferred to the NDP beta phosphate via a ping-pong mechanism, using a phosphorylated active-site intermediate. This NDK is microtubule-associated. The sequence is that of Nucleoside diphosphate kinase 1 (NDKR) from Oryza sativa subsp. indica (Rice).